A 394-amino-acid chain; its full sequence is RNA demethylase ALKBH5 (394 aa).

Disordered stretches follow at residues 1–26 (MAAASGYTDLREKLKSMTSRDNYKAG) and 48–83 (AEPYAAPGVKRKYPEDSDPERSDFEEQQLQKEEEAR). An N-acetylalanine modification is found at alanine 2. Lysine 57 is covalently cross-linked (Glycyl lysine isopeptide (Lys-Gly) (interchain with G-Cter in ubiquitin)). Positions 59 to 83 (KYPEDSDPERSDFEEQQLQKEEEAR) are enriched in basic and acidic residues. Residues serine 64 and serine 69 each carry the phosphoserine modification. Residues 67-116 (ERSDFEEQQLQKEEEARKVKSGIRQMRLFSQDECAKIEARIDEVVSRAEK) are a coiled coil. A Glycyl lysine isopeptide (Lys-Gly) (interchain with G-Cter in SUMO1) cross-link involves residue lysine 86. Serine 87 carries the phosphoserine modification. Lysine 132 is modified (N6-acetyllysine). Tyrosine 139 is an active-site residue. Asparagine 193, tyrosine 195, and histidine 204 together coordinate 2-oxoglutarate. A disulfide bridge connects residues cysteine 230 and cysteine 267. Lysine 235 is modified (N6-acetyllysine). Positions 266 and 277 each coordinate 2-oxoglutarate. The disordered stretch occupies residues 298-394 (SSSVLPPSYA…PARKVKMRRH (97 aa)). Lysine 321 participates in a covalent cross-link: Glycyl lysine isopeptide (Lys-Gly) (interchain with G-Cter in SUMO1). Serine 325 bears the Phosphoserine mark. Residue lysine 328 forms a Glycyl lysine isopeptide (Lys-Gly) (interchain with G-Cter in SUMO2) linkage. Residues 328 to 349 (KADPDAAHRPRILEMDKEENRR) show a composition bias toward basic and acidic residues. A phosphoserine mark is found at serine 371 and serine 384.

It belongs to the alkB family. In terms of assembly, monomer. Interacts with RBM33; promoting desumoylation by SENP1 and recruitment to N(6)-methyladenosine-containing mRNAs. Interacts (when acetylated by KAT8) with PSPC1; interaction facilitates recognition of N(6)-methyladenosine (m6A) mRNA. It depends on Fe(2+) as a cofactor. Post-translationally, phosphorylated at Ser-87 and Ser-325 in response to reactive oxygen species (ROS), promoting sumoylation and inactivation. Acetylated by KAT8 at Lys-235, promoting interaction with PSPC1, thereby facilitating recognition of N(6)-methyladenosine (m6A) mRNA by ALKBH5. Deacetylated at Lys-235 by HDAC7. In terms of processing, sumoylated at Lys-86 and Lys-321 by PIAS4 following phosphorylation at Ser-87 and Ser-325 in response to reactive oxygen species (ROS), inhibiting the RNA demethylase activity. Desumoylated by SENP1; relieving RNA demethylase inhibition, leading to N(6)-methyladenosine-containing mRNAs demethylation. Post-translationally, ubiquitinated at Lys-57 via 'Lys-48'-linked polyubiquitin chain, leading to its degradation by the proteasome. Deubiquitinated at Lys-57 by USP9X, promoting its stabilizazion.

The protein resides in the nucleus speckle. The enzyme catalyses an N(6)-methyladenosine in mRNA + 2-oxoglutarate + O2 = an adenosine in mRNA + formaldehyde + succinate + CO2. With respect to regulation, RNA demethylase activity is inhibited following sumoylation. Inhibition is relieved following desumoylation. Functionally, dioxygenase that specifically demethylates N(6)-methyladenosine (m6A) RNA, the most prevalent internal modification of messenger RNA (mRNA) in higher eukaryotes. Demethylates RNA by oxidative demethylation, which requires molecular oxygen, alpha-ketoglutarate and iron. Demethylation of m6A mRNA affects mRNA processing, translation and export. Can also demethylate N(6)-methyladenosine in single-stranded DNA (in vitro). Required for the late meiotic and haploid phases of spermatogenesis by mediating m6A demethylation in spermatocytes and round spermatids: m6A demethylation of target transcripts is required for correct splicing and the production of longer 3'-UTR mRNAs in male germ cells. Involved in paraspeckle assembly, a nuclear membraneless organelle, by undergoing liquid-liquid phase separation. Paraspeckle assembly is coupled with m6A demethylation of RNAs, such as NEAT1 non-coding RNA. Also acts as a negative regulator of T-cell development: inhibits gamma-delta T-cell proliferation via demethylation of JAG1 and NOTCH2 transcripts. Inhibits regulatory T-cell (Treg) recruitment by mediating demethylation and destabilization of CCL28 mRNAs. The polypeptide is RNA demethylase ALKBH5 (ALKBH5) (Bos taurus (Bovine)).